Here is a 119-residue protein sequence, read N- to C-terminus: Putative membrane protein insertion efficiency factor (119 aa).

The disordered stretch occupies residues 82 to 119 (NALRGEKGGESAADVPSGGSVSEPPGPAAETSPNAQGA).

Belongs to the UPF0161 family.

Its subcellular location is the cell membrane. In terms of biological role, could be involved in insertion of integral membrane proteins into the membrane. The chain is Putative membrane protein insertion efficiency factor from Streptomyces griseus subsp. griseus (strain JCM 4626 / CBS 651.72 / NBRC 13350 / KCC S-0626 / ISP 5235).